A 291-amino-acid chain; its full sequence is Light-independent protochlorophyllide reductase iron-sulfur ATP-binding protein (291 aa).

Residues 10 to 15 (GIGKST) and lysine 39 each bind ATP. Serine 14 is a binding site for Mg(2+). [4Fe-4S] cluster contacts are provided by cysteine 95 and cysteine 129. Position 180-181 (180-181 (NR)) interacts with ATP.

The protein belongs to the NifH/BchL/ChlL family. As to quaternary structure, homodimer. Protochlorophyllide reductase is composed of three subunits; ChlL, ChlN and ChlB. It depends on [4Fe-4S] cluster as a cofactor.

It localises to the plastid. It is found in the chloroplast. The catalysed reaction is chlorophyllide a + oxidized 2[4Fe-4S]-[ferredoxin] + 2 ADP + 2 phosphate = protochlorophyllide a + reduced 2[4Fe-4S]-[ferredoxin] + 2 ATP + 2 H2O. It functions in the pathway porphyrin-containing compound metabolism; chlorophyll biosynthesis (light-independent). In terms of biological role, component of the dark-operative protochlorophyllide reductase (DPOR) that uses Mg-ATP and reduced ferredoxin to reduce ring D of protochlorophyllide (Pchlide) to form chlorophyllide a (Chlide). This reaction is light-independent. The L component serves as a unique electron donor to the NB-component of the complex, and binds Mg-ATP. The polypeptide is Light-independent protochlorophyllide reductase iron-sulfur ATP-binding protein (Pinus contorta (Shore pine)).